We begin with the raw amino-acid sequence, 89 residues long: Large ribosomal subunit protein bL27 (89 aa).

Residues Met1–Leu21 are disordered.

This sequence belongs to the bacterial ribosomal protein bL27 family.

The protein is Large ribosomal subunit protein bL27 of Novosphingobium aromaticivorans (strain ATCC 700278 / DSM 12444 / CCUG 56034 / CIP 105152 / NBRC 16084 / F199).